The sequence spans 156 residues: Large ribosomal subunit protein uL15 (156 aa).

Positions 1–16 (MVRRFKRGTKYRRGSR) are enriched in basic residues. Residues 1-37 (MVRRFKRGTKYRRGSRTHGWGRVGQHRKSGGSGGKGM) are disordered.

The protein belongs to the universal ribosomal protein uL15 family. Part of the 50S ribosomal subunit.

In terms of biological role, binds to the 23S rRNA. This is Large ribosomal subunit protein uL15 from Pyrobaculum aerophilum (strain ATCC 51768 / DSM 7523 / JCM 9630 / CIP 104966 / NBRC 100827 / IM2).